Here is a 235-residue protein sequence, read N- to C-terminus: Elongation factor Tu, chloroplastic (235 aa).

Residues 1-125 (KNMITGAAQM…AVDEYIPTPV (125 aa)) form the tr-type G domain. 47-50 (NKQD) contacts GTP.

The protein belongs to the TRAFAC class translation factor GTPase superfamily. Classic translation factor GTPase family. EF-Tu/EF-1A subfamily.

The protein resides in the plastid. The protein localises to the chloroplast. It catalyses the reaction GTP + H2O = GDP + phosphate + H(+). GTP hydrolase that promotes the GTP-dependent binding of aminoacyl-tRNA to the A-site of ribosomes during protein biosynthesis. The polypeptide is Elongation factor Tu, chloroplastic (tufA) (Gracilariopsis lemaneiformis (Red alga)).